A 681-amino-acid chain; its full sequence is Propionyl-CoA carboxylase alpha chain (681 aa).

In terms of domain architecture, Biotin carboxylation spans 1–466 (MFNKILIANR…TTAFIAEEYP (466 aa)). Residues lysine 116, 148-209 (SNQI…PRHI), glutamate 200, and asparagine 235 each bind ATP. An ATP-grasp domain is found at 120–317 (KKIAQEANVS…LVEQMIRVAA (198 aa)). Mg(2+)-binding residues include glutamate 275, glutamate 288, and asparagine 290. Mn(2+)-binding residues include glutamate 275, glutamate 288, and asparagine 290. Glutamate 288 is an active-site residue. Position 348 (phenylalanine 348) interacts with biotin. A Biotinyl-binding domain is found at 602–681 (LMPEKLPPDT…AVDDVIMEFE (80 aa)). At lysine 647 the chain carries N6-biotinyllysine.

As to quaternary structure, the holoenzyme is a dodecamer composed of 6 PccA/alpha subunits and 6 PccB/beta subunits. Mg(2+) is required as a cofactor. Mn(2+) serves as cofactor. Requires biotin as cofactor. In terms of processing, the biotin cofactor is covalently attached to the C-terminal biotinyl-binding domain and is required for the catalytic activity.

It carries out the reaction propanoyl-CoA + hydrogencarbonate + ATP = (S)-methylmalonyl-CoA + ADP + phosphate + H(+). It functions in the pathway metabolic intermediate metabolism; propanoyl-CoA degradation; succinyl-CoA from propanoyl-CoA: step 1/3. Its function is as follows. This is one of the 2 subunits of the biotin-dependent propionyl-CoA carboxylase (PCC), the enzyme catalyzing the carboxylation of propionyl-CoA/propanoyl-CoA to D-methylmalonyl-CoA/(S)-methylmalonyl-CoA. Within the holoenzyme, the alpha subunit catalyzes the ATP-dependent carboxylation of the biotin carried by the biotin carboxyl carrier (BCC) domain, while the beta subunit then tranfers the carboxyl group from carboxylated biotin to propionyl-CoA. The sequence is that of Propionyl-CoA carboxylase alpha chain from Ruegeria pomeroyi (strain ATCC 700808 / DSM 15171 / DSS-3) (Silicibacter pomeroyi).